We begin with the raw amino-acid sequence, 146 residues long: Histone H2B (146 aa).

The segment covering 1-16 (MAPRADKKPAEKKPGA) has biased composition (basic and acidic residues). Residues 1–52 (MAPRADKKPAEKKPGAEKTPVAEKAPAEKKPRAGKKLPRDAGAAGDKKKKRA) are disordered. N6-acetyllysine is present on residues Lys7, Lys35, and Lys36. A Glycyl lysine isopeptide (Lys-Gly) (interchain with G-Cter in ubiquitin) cross-link involves residue Lys142.

The protein belongs to the histone H2B family. As to quaternary structure, the nucleosome is a histone octamer containing two molecules each of H2A, H2B, H3 and H4 assembled in one H3-H4 heterotetramer and two H2A-H2B heterodimers. The octamer wraps approximately 147 bp of DNA. Can be acetylated to form H2BK6ac, H2BK33ac and H2BK34ac. Post-translationally, monoubiquitinated to form H2BK143ub1; may give a specific tag for epigenetic transcriptional activation.

It is found in the nucleus. It localises to the chromosome. Functionally, core component of nucleosome. Nucleosomes wrap and compact DNA into chromatin, limiting DNA accessibility to the cellular machineries which require DNA as a template. Histones thereby play a central role in transcription regulation, DNA repair, DNA replication and chromosomal stability. DNA accessibility is regulated via a complex set of post-translational modifications of histones, also called histone code, and nucleosome remodeling. The polypeptide is Histone H2B (HIS2B) (Nicotiana tabacum (Common tobacco)).